Consider the following 356-residue polypeptide: Cyclin-dependent kinase 5 activator 1 (356 aa).

2 disordered regions span residues 1–53 (MGAN…AKES) and 66–99 (IQPV…FTRN). 2 stretches are compositionally biased toward low complexity: residues 40 to 49 (SNTSSRSSSN) and 71 to 92 (SRRS…SSDS).

Belongs to the cyclin-dependent kinase 5 activator family. As to quaternary structure, heterodimer composed of a catalytic subunit cdk-5 and a regulatory subunit cdka-1. Interaction with cdka-1 is required for cdk-5 activation. In terms of tissue distribution, expressed in all classes of neurons in the ventral cord.

The protein resides in the cytoplasm. The protein localises to the cell projection. It is found in the dendrite. Its subcellular location is the axon. Its function is as follows. Activator of the kinase cdk-5. In several motor neurons, promotes the polarized trafficking of synaptic vesicles and dense-core vesicles. In the ventral nerve cord, regulates the synaptic localization of the glutamate receptor, glr-1. In DA motor neurons, regulates axonal transport of synaptic vesicle precursors by inhibiting dynein-mediated retrograde transport. Regulates the polarized distribution of dense-core vesicles in DB motor neurons. May regulate these processes in association with cdk-5. May also play a role in GABAergic synaptic vesicle localization in the ventral nerve cord. The protein is Cyclin-dependent kinase 5 activator 1 of Caenorhabditis elegans.